A 415-amino-acid polypeptide reads, in one-letter code: Tyrosine--tRNA ligase (415 aa).

A 'HIGH' region motif is present at residues 54-63 (PTGSNIHLGH). Residues 248 to 252 (KMSKS) carry the 'KMSKS' region motif. Lys251 contacts ATP. The S4 RNA-binding domain occupies 351-414 (AKAFYLFSAV…LGKKTFRRLV (64 aa)).

This sequence belongs to the class-I aminoacyl-tRNA synthetase family. TyrS type 2 subfamily. Homodimer.

It is found in the cytoplasm. It carries out the reaction tRNA(Tyr) + L-tyrosine + ATP = L-tyrosyl-tRNA(Tyr) + AMP + diphosphate + H(+). In terms of biological role, catalyzes the attachment of tyrosine to tRNA(Tyr) in a two-step reaction: tyrosine is first activated by ATP to form Tyr-AMP and then transferred to the acceptor end of tRNA(Tyr). The protein is Tyrosine--tRNA ligase of Synechococcus sp. (strain CC9605).